Consider the following 469-residue polypeptide: Adenosylhomocysteinase (469 aa).

The substrate site is built by T60, D135, and E195. 196-198 (TTT) lines the NAD(+) pocket. Residues K225 and D229 each coordinate substrate. Residues N230, 259–264 (GYGDVG), E282, N317, 338–340 (IGH), and N383 contribute to the NAD(+) site.

Belongs to the adenosylhomocysteinase family. Requires NAD(+) as cofactor.

Its subcellular location is the cytoplasm. The catalysed reaction is S-adenosyl-L-homocysteine + H2O = L-homocysteine + adenosine. It participates in amino-acid biosynthesis; L-homocysteine biosynthesis; L-homocysteine from S-adenosyl-L-homocysteine: step 1/1. May play a key role in the regulation of the intracellular concentration of adenosylhomocysteine. This chain is Adenosylhomocysteinase, found in Maricaulis maris (strain MCS10) (Caulobacter maris).